The primary structure comprises 190 residues: MVKGLEKFNELVESFANLPTIGKKTAIRLAYHLCINNQIDGMKLAHNIENAIRFIKPCEQCGALSENELCEICSDEERNKNILCIVESPKDILTLEESQSYNGLYFVLDELNEEKLEKLKQIILKLNISELIFALTHSINSDATIFFIEDKFKGLNLTFSKIAQGIPSGVNLENVDLISLNKAMNFRTKI.

The segment at 58-73 (CEQCGALSENELCEIC) adopts a C4-type zinc-finger fold. The 87-residue stretch at 81-167 (NILCIVESPK…TFSKIAQGIP (87 aa)) folds into the Toprim domain.

It belongs to the RecR family.

Its function is as follows. May play a role in DNA repair. It seems to be involved in an RecBC-independent recombinational process of DNA repair. It may act with RecF and RecO. The chain is Recombination protein RecR from Campylobacter jejuni subsp. jejuni serotype O:23/36 (strain 81-176).